The primary structure comprises 477 residues: Spliceosome-associated protein CWC27 homolog (477 aa).

Residues 11 to 166 enclose the PPIase cyclophilin-type domain; that stretch reads SNGKVLLKTT…NPHKIKCTEV (156 aa). Disordered stretches follow at residues 203 to 355 and 401 to 477; these read LLSF…AENT and TQAI…KERR. The segment covering 208–218 has biased composition (acidic residues); sequence EEAEEDEEEVN. Composition is skewed to basic and acidic residues over residues 230–240 and 247–258; these read SSHDLLKDDPR and VEREKDSQSADS. The span at 259-279 shows a compositional bias: acidic residues; sequence DKDEDEMSDDDDEEEDDEMDS. Basic and acidic residues-rich tracts occupy residues 280 to 299, 311 to 353, and 430 to 442; these read DEKH…DPSK, EERK…KEAE, and QFEE…KDAN. Residues 308–381 are a coiled coil; it reads DEAEERKSSR…EEVRKKNTNK (74 aa).

Belongs to the cyclophilin-type PPIase family. In terms of assembly, part of the activated spliceosome B/catalytic step 1 spliceosome, one of the forms of the spliceosome which has a well-formed active site but still cannot catalyze the branching reaction and is composed at least of 52 proteins, the U2, U5 and U6 snRNAs and the pre-mRNA. Recruited during early steps of activated spliceosome B maturation, it is probably one of the first proteins released from this complex as he matures to the spliceosome C complex. Component of the minor spliceosome, which splices U12-type introns.

The protein localises to the nucleus. Functionally, as part of the spliceosome, plays a role in pre-mRNA splicing. Probable inactive PPIase with no peptidyl-prolyl cis-trans isomerase activity. The chain is Spliceosome-associated protein CWC27 homolog (cwc27) from Xenopus laevis (African clawed frog).